A 102-amino-acid polypeptide reads, in one-letter code: Large ribosomal subunit protein bL28 (102 aa).

The disordered stretch occupies residues 1–20 (MSRRCELTAKGPQVGHKVSH).

This sequence belongs to the bacterial ribosomal protein bL28 family.

This chain is Large ribosomal subunit protein bL28, found in Bradyrhizobium sp. (strain BTAi1 / ATCC BAA-1182).